The following is a 163-amino-acid chain: Crossover junction endodeoxyribonuclease RuvC (163 aa).

Catalysis depends on residues Asp-9, Glu-76, and Asp-148. Mg(2+)-binding residues include Asp-9, Glu-76, and Asp-148.

It belongs to the RuvC family. As to quaternary structure, homodimer which binds Holliday junction (HJ) DNA. The HJ becomes 2-fold symmetrical on binding to RuvC with unstacked arms; it has a different conformation from HJ DNA in complex with RuvA. In the full resolvosome a probable DNA-RuvA(4)-RuvB(12)-RuvC(2) complex forms which resolves the HJ. Requires Mg(2+) as cofactor.

The protein resides in the cytoplasm. The catalysed reaction is Endonucleolytic cleavage at a junction such as a reciprocal single-stranded crossover between two homologous DNA duplexes (Holliday junction).. In terms of biological role, the RuvA-RuvB-RuvC complex processes Holliday junction (HJ) DNA during genetic recombination and DNA repair. Endonuclease that resolves HJ intermediates. Cleaves cruciform DNA by making single-stranded nicks across the HJ at symmetrical positions within the homologous arms, yielding a 5'-phosphate and a 3'-hydroxyl group; requires a central core of homology in the junction. The consensus cleavage sequence is 5'-(A/T)TT(C/G)-3'. Cleavage occurs on the 3'-side of the TT dinucleotide at the point of strand exchange. HJ branch migration catalyzed by RuvA-RuvB allows RuvC to scan DNA until it finds its consensus sequence, where it cleaves and resolves the cruciform DNA. In Nostoc sp. (strain PCC 7120 / SAG 25.82 / UTEX 2576), this protein is Crossover junction endodeoxyribonuclease RuvC.